The primary structure comprises 889 residues: Alanine--tRNA ligase (889 aa).

Residues histidine 564, histidine 568, cysteine 677, and histidine 681 each coordinate Zn(2+).

This sequence belongs to the class-II aminoacyl-tRNA synthetase family. The cofactor is Zn(2+).

It is found in the cytoplasm. It carries out the reaction tRNA(Ala) + L-alanine + ATP = L-alanyl-tRNA(Ala) + AMP + diphosphate. Catalyzes the attachment of alanine to tRNA(Ala) in a two-step reaction: alanine is first activated by ATP to form Ala-AMP and then transferred to the acceptor end of tRNA(Ala). Also edits incorrectly charged Ser-tRNA(Ala) and Gly-tRNA(Ala) via its editing domain. The polypeptide is Alanine--tRNA ligase (Rhodopseudomonas palustris (strain ATCC BAA-98 / CGA009)).